Here is a 679-residue protein sequence, read N- to C-terminus: Methionine--tRNA ligase (679 aa).

The short motif at 14-24 is the 'HIGH' region element; it reads PYANGSIHLGH. Zn(2+)-binding residues include Cys145, Cys148, Cys158, and Cys161. The 'KMSKS' region motif lies at 331-335; sequence KMSKS. Lys334 is an ATP binding site. Residues 577 to 679 form the tRNA-binding domain; it reads TFAAVDLRIA…NGAKPGQRVM (103 aa).

This sequence belongs to the class-I aminoacyl-tRNA synthetase family. MetG type 1 subfamily. Homodimer. Zn(2+) is required as a cofactor.

The protein localises to the cytoplasm. It catalyses the reaction tRNA(Met) + L-methionine + ATP = L-methionyl-tRNA(Met) + AMP + diphosphate. Its function is as follows. Is required not only for elongation of protein synthesis but also for the initiation of all mRNA translation through initiator tRNA(fMet) aminoacylation. This Stutzerimonas stutzeri (strain A1501) (Pseudomonas stutzeri) protein is Methionine--tRNA ligase.